The chain runs to 128 residues: Large ribosomal subunit protein eL8 (128 aa).

The protein belongs to the eukaryotic ribosomal protein eL8 family. Part of the 50S ribosomal subunit. Probably part of the RNase P complex.

The protein localises to the cytoplasm. Functionally, multifunctional RNA-binding protein that recognizes the K-turn motif in ribosomal RNA, the RNA component of RNase P, box H/ACA, box C/D and box C'/D' sRNAs. This chain is Large ribosomal subunit protein eL8, found in Ignicoccus hospitalis (strain KIN4/I / DSM 18386 / JCM 14125).